Reading from the N-terminus, the 142-residue chain is Acidic phospholipase A2 Bc-PL (142 aa).

Positions 1–9 (AVCVSLLGA) are cleaved as a signal peptide. The propeptide occupies 10–17 (ANIPPQPL). Disulfide bonds link cysteine 28–cysteine 94, cysteine 44–cysteine 141, cysteine 46–cysteine 62, cysteine 61–cysteine 122, cysteine 68–cysteine 115, cysteine 78–cysteine 108, and cysteine 101–cysteine 113. Residues tyrosine 45, glycine 47, and glycine 49 each coordinate Ca(2+). Histidine 65 is a catalytic residue. Aspartate 66 serves as a coordination point for Ca(2+). Residue aspartate 116 is part of the active site.

It belongs to the phospholipase A2 family. Group I subfamily. D49 sub-subfamily. The cofactor is Ca(2+). Expressed by the venom gland.

It localises to the secreted. It carries out the reaction a 1,2-diacyl-sn-glycero-3-phosphocholine + H2O = a 1-acyl-sn-glycero-3-phosphocholine + a fatty acid + H(+). In terms of biological role, PLA2 catalyzes the calcium-dependent hydrolysis of the 2-acyl groups in 3-sn-phosphoglycerides. This chain is Acidic phospholipase A2 Bc-PL, found in Bungarus candidus (Malayan krait).